Reading from the N-terminus, the 241-residue chain is ATP-dependent dethiobiotin synthetase BioD (241 aa).

Residue 13–18 (DIGKTV) participates in ATP binding. T17 contributes to the Mg(2+) binding site. K38 is a catalytic residue. S42 is a binding site for substrate. ATP contacts are provided by residues D55, 116 to 119 (EGSG), and 180 to 181 (NK). Residues D55 and E116 each contribute to the Mg(2+) site.

This sequence belongs to the dethiobiotin synthetase family. Homodimer. Mg(2+) serves as cofactor.

The protein localises to the cytoplasm. It catalyses the reaction (7R,8S)-7,8-diammoniononanoate + CO2 + ATP = (4R,5S)-dethiobiotin + ADP + phosphate + 3 H(+). The protein operates within cofactor biosynthesis; biotin biosynthesis; biotin from 7,8-diaminononanoate: step 1/2. Functionally, catalyzes a mechanistically unusual reaction, the ATP-dependent insertion of CO2 between the N7 and N8 nitrogen atoms of 7,8-diaminopelargonic acid (DAPA, also called 7,8-diammoniononanoate) to form a ureido ring. This Clostridium kluyveri (strain NBRC 12016) protein is ATP-dependent dethiobiotin synthetase BioD.